The sequence spans 210 residues: 3-hexulose-6-phosphate synthase (210 aa).

Belongs to the HPS/KGPDC family. HPS subfamily.

It carries out the reaction D-ribulose 5-phosphate + formaldehyde = D-arabino-hex-3-ulose 6-phosphate. Its pathway is one-carbon metabolism; formaldehyde assimilation via RuMP pathway; D-fructose 6-phosphate from D-ribulose 5-phosphate and formaldehyde: step 1/2. Functionally, catalyzes the condensation of ribulose 5-phosphate with formaldehyde to form 3-hexulose 6-phosphate. The sequence is that of 3-hexulose-6-phosphate synthase from Staphylococcus aureus (strain USA300).